Reading from the N-terminus, the 224-residue chain is 7-cyano-7-deazaguanine synthase (224 aa).

10 to 20 is an ATP binding site; the sequence is LSGGLDSATVV. 4 residues coordinate Zn(2+): Cys-189, Cys-199, Cys-202, and Cys-205.

This sequence belongs to the QueC family. Zn(2+) is required as a cofactor.

The enzyme catalyses 7-carboxy-7-deazaguanine + NH4(+) + ATP = 7-cyano-7-deazaguanine + ADP + phosphate + H2O + H(+). The protein operates within purine metabolism; 7-cyano-7-deazaguanine biosynthesis. Functionally, catalyzes the ATP-dependent conversion of 7-carboxy-7-deazaguanine (CDG) to 7-cyano-7-deazaguanine (preQ(0)). The protein is 7-cyano-7-deazaguanine synthase of Pseudomonas paraeruginosa (strain DSM 24068 / PA7) (Pseudomonas aeruginosa (strain PA7)).